The chain runs to 395 residues: Major outer membrane porin, serovar F (395 aa).

A signal peptide spans 1–22 (MKKLLKSVLVFAALSSASSLQA).

Belongs to the chlamydial porin (CP) (TC 1.B.2) family. Part of a disulfide cross-linked outer membrane complex (COMC) composed of the major outer membrane porin (MOMP), the small cysteine-rich protein (OmcA) and the large cysteine-rich periplasmic protein (OmcB).

It is found in the cell outer membrane. Its function is as follows. In elementary bodies (EBs, the infectious stage, which is able to survive outside the host cell) provides the structural integrity of the outer envelope through disulfide cross-links with the small cysteine-rich protein and the large cysteine-rich periplasmic protein. It has been described in publications as the Sarkosyl-insoluble COMC (Chlamydia outer membrane complex), and serves as the functional equivalent of peptidoglycan. Functionally, permits diffusion of specific solutes through the outer membrane. This Chlamydia trachomatis protein is Major outer membrane porin, serovar F (ompA).